A 1778-amino-acid chain; its full sequence is Ankyrin repeat domain-containing protein 36C (1778 aa).

ANK repeat units lie at residues 64–93 (KERT…ELNL), 97–126 (EDRT…DPNI), 130–159 (FGRT…NIEE), 163–192 (DEYP…NINA), and 196–225 (LGRS…DVFS). Disordered stretches follow at residues 260-365 (LSIN…DEQK), 501-526 (ALPA…VKDS), 538-653 (DSLT…QKQS), 671-1027 (RITG…QKQL), and 1051-1072 (IRGT…EKDS). Composition is skewed to polar residues over residues 261–272 (SINSNPVSSQKQ) and 297–306 (KSGTVSSQKQ). Residues 539-555 (SLTSSEESSERPPLSTL) are compositionally biased toward low complexity. Composition is skewed to basic and acidic residues over residues 585–596 (PAEKATSDDKDS) and 619–630 (PAEKATSDEKDS). Polar residues-rich tracts occupy residues 631 to 653 (VSNI…QKQS) and 679 to 691 (GTVS…PSKA). The span at 794-813 (TSDEKDSFSNITREKKDGEI) shows a compositional bias: basic and acidic residues. Residue serine 829 is modified to Phosphoserine. 2 stretches are compositionally biased toward basic and acidic residues: residues 840 to 849 (RGKEDGEKTR) and 862 to 881 (TSDE…DGET). Serine 897 is subject to Phosphoserine. Residues 907–917 (AREKKDGEKSR) show a composition bias toward basic and acidic residues. The segment covering 942-955 (RGKKHGEKTRRVSS) has biased composition (basic residues). Composition is skewed to polar residues over residues 983–992 (ISGTVSSQKQ) and 1005–1026 (VSNI…SQKQ). 4 coiled-coil regions span residues 1157–1187 (EQDL…QIHS), 1247–1333 (ELKD…YRIE), 1362–1480 (SETD…DHDQ), and 1544–1768 (VFEH…ILQH).

It belongs to the ANKRD36 family.

The protein is Ankyrin repeat domain-containing protein 36C (ANKRD36C) of Homo sapiens (Human).